Consider the following 139-residue polypeptide: Putative nickel-responsive regulator (139 aa).

Ni(2+)-binding residues include H79, H90, H92, and C98.

This sequence belongs to the transcriptional regulatory CopG/NikR family. Requires Ni(2+) as cofactor.

Its function is as follows. Transcriptional regulator. The protein is Putative nickel-responsive regulator of Nitratidesulfovibrio vulgaris (strain DSM 19637 / Miyazaki F) (Desulfovibrio vulgaris).